We begin with the raw amino-acid sequence, 122 residues long: Ribosomal protein eL22-like 1 (122 aa).

Ser-112, Ser-118, and Ser-120 each carry phosphoserine.

It belongs to the eukaryotic ribosomal protein eL22 family.

This is Ribosomal protein eL22-like 1 (Rpl22l1) from Mus musculus (Mouse).